A 158-amino-acid polypeptide reads, in one-letter code: Snaclec coagulation factor X-activating enzyme light chain 2 (158 aa).

An N-terminal signal peptide occupies residues 1–23; that stretch reads MGRSISVSFGLLAVFLSLSGTGA. Disulfide bonds link cysteine 27–cysteine 38, cysteine 55–cysteine 152, and cysteine 127–cysteine 144. Residues 34-153 form the C-type lectin domain; it reads YRYFCYRVFK…CEEPYPFVCK (120 aa).

The protein belongs to the snaclec family. Heterotrimer; disulfide-linked. The heterotrimer consists of 1 heavy chain (a metalloproteinase) and 2 light chains: LC1 and LC2. Expressed by the venom gland.

The protein resides in the secreted. Regulatory subunit of the blood coagulation factor X-activating enzyme. Activates coagulation factor X (F10) by cleaving the Arg-Ile bond at position 234, activates coagulation factor IX (F9) by cleaving the Arg-Val bond at position 226 and is also able to activate protein C (PROC). May serve as an exosite by which the enzyme recognizes and binds to the Gla domain of factor X (F10) in a calcium-dependent manner. In Macrovipera lebetinus (Levantine viper), this protein is Snaclec coagulation factor X-activating enzyme light chain 2 (LC2).